We begin with the raw amino-acid sequence, 276 residues long: 2-hydroxy-6-oxo-2,4-heptadienoate hydrolase (276 aa).

The 232-residue stretch at 28 to 259 folds into the AB hydrolase-1 domain; that stretch reads NPVVLVHGSG…GRCGHWVQIE (232 aa). Active-site residues include serine 105, aspartate 226, and histidine 254.

This sequence belongs to the DmpD/TodF/XylF esterase family.

It carries out the reaction (2Z,4E)-2-hydroxy-6-oxohepta-2,4-dienoate + H2O = (2Z)-2-hydroxypenta-2,4-dienoate + acetate + H(+). The protein operates within xenobiotic degradation; toluene degradation. Functionally, catalyzes the hydrolysis of 2-hydroxy-6-oxohepta-2,4-dienoate into 2-hydroxypenta-2,4-dienoate and acetate. This is 2-hydroxy-6-oxo-2,4-heptadienoate hydrolase (todF) from Pseudomonas putida (strain ATCC 700007 / DSM 6899 / JCM 31910 / BCRC 17059 / LMG 24140 / F1).